We begin with the raw amino-acid sequence, 465 residues long: Sensor histidine kinase ZraS (465 aa).

Over 1-14 (MRFMQRSKDSLAKW) the chain is Cytoplasmic. Residues 15–35 (LSAILPVVIVGLVGLFAVTVI) traverse the membrane as a helical segment. At 36–201 (RDYGRASEAD…ATQSGEKRNT (166 aa)) the chain is on the periplasmic side. A helical membrane pass occupies residues 202–222 (LIILFALATVLLASVLSFFWY). Residues 223–465 (RRYLRSRQLL…VNITRKDPQG (243 aa)) are Cytoplasmic-facing. One can recognise a Histidine kinase domain in the interval 251–458 (GVAHEIRNPL…TFTLWLPVNI (208 aa)). His254 bears the Phosphohistidine; by autocatalysis mark.

In terms of processing, autophosphorylated.

Its subcellular location is the cell inner membrane. It catalyses the reaction ATP + protein L-histidine = ADP + protein N-phospho-L-histidine.. Its activity is regulated as follows. Activity of the ZraS/ZraR two-component system is repressed by the zinc-bound form of ZraP, which probably interacts with the periplasmic region of ZraS. Its function is as follows. Part of the Zra signaling pathway, an envelope stress response (ESR) system composed of the periplasmic accessory protein ZraP, the histidine kinase ZraS and the transcriptional regulator ZraR. The ZraPSR system contributes to antibiotic resistance and is important for membrane integrity in the presence of membrane-targeting biocides. ZraS is a member of the two-component regulatory system ZraS/ZraR. Functions as a membrane-associated sensor kinase that phosphorylates ZraR in response to high concentrations of Zn(2+) or Pb(2+) in the medium. Binds one zinc molecule with high affinity via its periplasmic domain, inducing a conformational change that is transmitted to the histidine kinase domain and leads to the activation of ZraR. The system has no direct role in zinc or copper resistance. This is Sensor histidine kinase ZraS from Escherichia coli (strain K12).